The following is a 160-amino-acid chain: Probable cyclic pyranopterin monophosphate synthase (160 aa).

Residues 1–12 (MSDDSELTHVTD) show a composition bias toward basic and acidic residues. Residues 1 to 24 (MSDDSELTHVTDDGDAQMVDVGEK) form a disordered region. Substrate is bound by residues 78-80 (MCH) and 114-115 (ME). Asp129 is a catalytic residue.

Belongs to the MoaC family. As to quaternary structure, homohexamer; trimer of dimers.

The catalysed reaction is (8S)-3',8-cyclo-7,8-dihydroguanosine 5'-triphosphate = cyclic pyranopterin phosphate + diphosphate. It functions in the pathway cofactor biosynthesis; molybdopterin biosynthesis. Functionally, catalyzes the conversion of (8S)-3',8-cyclo-7,8-dihydroguanosine 5'-triphosphate to cyclic pyranopterin monophosphate (cPMP). The protein is Probable cyclic pyranopterin monophosphate synthase of Natronomonas pharaonis (strain ATCC 35678 / DSM 2160 / CIP 103997 / JCM 8858 / NBRC 14720 / NCIMB 2260 / Gabara) (Halobacterium pharaonis).